The sequence spans 381 residues: MGPIGTEADENQTVEEMKVEQYGPQTTPRGELVPDPEPELIDSTKLIEVQVVLILAYCSIILLGVIGNSLVIHVVIKFKSMRTVTNFFIANLAVADLVVNTLCLPFTLTYTLMGEWKMGPVLCHLVPYAQGLAVQVSTITLTVIALDRHRCIVYHLESKISKRISFLIIGLAWGISALLASPLAIFREYSLIEIIPDFEIVACTEKWPGEEKSIYGTVYSLSSLLILYVLPLGIISFSYTRIWSKLKSHVSPGAANDHYHQRRQKTTKMLVCVVVVFAVSWLPLHAFQLAVDIDSHVLDLKEYKLIFTVFHIIAMCSTFANPLLYGWMNSNYRKAFLSAFRCEQRLDAIHSEVSVTFKAKKNLEVRKNSGPNDSFTEATNV.

Residues 1-35 (MGPIGTEADENQTVEEMKVEQYGPQTTPRGELVPD) are disordered. Over 1–51 (MGPIGTEADENQTVEEMKVEQYGPQTTPRGELVPDPEPELIDSTKLIEVQV) the chain is Extracellular. Residue Asn-11 is glycosylated (N-linked (GlcNAc...) asparagine). The helical transmembrane segment at 52–72 (VLILAYCSIILLGVIGNSLVI) threads the bilayer. Over 73–86 (HVVIKFKSMRTVTN) the chain is Cytoplasmic. A helical membrane pass occupies residues 87–107 (FFIANLAVADLVVNTLCLPFT). Residues 108–124 (LTYTLMGEWKMGPVLCH) are Extracellular-facing. Cys-123 and Cys-203 form a disulfide bridge. A helical transmembrane segment spans residues 125–145 (LVPYAQGLAVQVSTITLTVIA). At 146–165 (LDRHRCIVYHLESKISKRIS) the chain is on the cytoplasmic side. The chain crosses the membrane as a helical span at residues 166-186 (FLIIGLAWGISALLASPLAIF). At 187-216 (REYSLIEIIPDFEIVACTEKWPGEEKSIYG) the chain is on the extracellular side. The helical transmembrane segment at 217–237 (TVYSLSSLLILYVLPLGIISF) threads the bilayer. Residues 238 to 268 (SYTRIWSKLKSHVSPGAANDHYHQRRQKTTK) are Cytoplasmic-facing. The helical transmembrane segment at 269 to 289 (MLVCVVVVFAVSWLPLHAFQL) threads the bilayer. At 290 to 304 (AVDIDSHVLDLKEYK) the chain is on the extracellular side. The chain crosses the membrane as a helical span at residues 305 to 325 (LIFTVFHIIAMCSTFANPLLY). Residues 326 to 381 (GWMNSNYRKAFLSAFRCEQRLDAIHSEVSVTFKAKKNLEVRKNSGPNDSFTEATNV) lie on the Cytoplasmic side of the membrane. A lipid anchor (S-palmitoyl cysteine) is attached at Cys-342.

Belongs to the G-protein coupled receptor 1 family.

Its subcellular location is the cell membrane. Functionally, receptor for neuropeptide Y and peptide YY. This Macaca mulatta (Rhesus macaque) protein is Neuropeptide Y receptor type 2 (NPY2R).